The following is a 222-amino-acid chain: Capsular polysaccharide type 8 biosynthesis protein cap8A (222 aa).

Transmembrane regions (helical) follow at residues 20 to 40 (ILII…FFVL) and 172 to 192 (VVNL…YIFF).

It belongs to the CpsC/CapA family.

It is found in the cell membrane. Required for the biosynthesis of type 8 capsular polysaccharide (Cap8/CP8). Might act as the chain-length regulator. This is Capsular polysaccharide type 8 biosynthesis protein cap8A (cap8A) from Staphylococcus aureus.